The chain runs to 674 residues: MPRFRDLSHNCRPSEAPRVMEPKNRDRTVDPAVLEMLVKSKDDKVITAFDRFVAQQPQCKIGYEGICCRFCMAGPCRIKATDGPGSRGICGASAWTIVARNVGLMILTGAAAHCEHGNHIAHALVEMAEGKAPDYSVKDEAKLKEVCRRVGIEVEGKSVLELAQEVGEKALEDFRRLKGEGEATWLMTTINEGRKEKFRTHNVVPFGIHASISELVNQAHMGMDNDPVNLVFSAIRVALADYTGEHIATDFSDILFGTPQPVVSEANMGVLDPDQVNFVLHGHNPLLSEIIVQAAREMEGEAKAAGAKGINLVGICCTGNEVLMRQGIPLVTSFASQELAICTGAIDAMCVDVQCIMPSISAVAECYHTRIITTADNAKIPGAYHIDYQTATAIESAKTAIRMAIEAFKERKESNRPVYIPQIKNRVVAGWSLEALTKLLATQNAQNPIRVLNQAILDGELAGVALICGCNNLKGFQDNSHLTVMKELLKNNVFVVATGCSAQAAGKLGLLDPANVETYCGDGLKGFLKRLGEGANIEIGLPPVFHMGSCVDNSRAVDLLMAMANDLGVDTPKVPFVASAPEAMSGKAAAIGTWWVSLGVPTHVGTMPPVEGSDLIYSILTQIASDVYGGYFIFEMDPQVAARKILDALEYRTWKLGVHKEVAERYETKLCQGY.

Residues 1-25 (MPRFRDLSHNCRPSEAPRVMEPKNR) are disordered. Residues Cys-59, Cys-67, Cys-68, Cys-71, Cys-76, and Cys-90 each contribute to the [4Fe-4S] cluster site. The [Ni-4Fe-4S] cluster site is built by His-283, Cys-317, Cys-355, Cys-470, Cys-500, and Cys-550.

As to quaternary structure, tetramer of two alpha and two beta chains. [Ni-Fe-S] cluster serves as cofactor. [4Fe-4S] cluster is required as a cofactor.

It catalyses the reaction CO + 2 oxidized [2Fe-2S]-[ferredoxin] + H2O = 2 reduced [2Fe-2S]-[ferredoxin] + CO2 + 2 H(+). The beta subunit (this protein) generates CO from CO(2), while the alpha subunit combines the CO with CoA and a methyl group to form acetyl-CoA. The methyl group, which is incorporated into acetyl-CoA, is transferred to the alpha subunit by a corrinoid iron-sulfur protein. This Moorella thermoacetica (Clostridium thermoaceticum) protein is Carbon monoxide dehydrogenase/acetyl-CoA synthase subunit beta.